We begin with the raw amino-acid sequence, 802 residues long: Leucine--tRNA ligase (802 aa).

Residues 40–51 (PYPSGAGLHVGH) carry the 'HIGH' region motif. The 'KMSKS' region motif lies at 576–580 (KMSKS). Lysine 579 is a binding site for ATP.

This sequence belongs to the class-I aminoacyl-tRNA synthetase family.

The protein resides in the cytoplasm. It carries out the reaction tRNA(Leu) + L-leucine + ATP = L-leucyl-tRNA(Leu) + AMP + diphosphate. The sequence is that of Leucine--tRNA ligase from Bacillus cereus (strain G9842).